A 492-amino-acid chain; its full sequence is Myocyte-specific enhancer factor 2A (492 aa).

The MADS-box domain maps to 3–57 (RKKIQITRIMDERNRQVTFTKRKFGLMKKAYELSVLCDCEIALIIFNSSNKLFQY). The segment at residues 58–86 (ASTDMDKVLLKYTEYNEPHESRTNSDIVE) is a DNA-binding region (mef2-type). Phosphoserine; by CK2 is present on Ser59. Ser98 carries the phosphoserine modification. A disordered region spans residues 183 to 227 (PQATLHRNVSPGAPQRPPSTGSAGGMLSTSDLTVPNGAGSSPVGN). Polar residues predominate over residues 209-227 (LSTSDLTVPNGAGSSPVGN). Ser235 carries the phosphoserine modification. Residues 242–270 (TGANSLGKVMPTKSPPPPGGGSLGMNSRK) are disordered. Lys249 bears the N6-acetyllysine mark. At Ser255 the chain carries Phosphoserine. Residues 266-283 (MNSRKPDLRVVIPPSSKG) are required for interaction with MAPKs. Phosphothreonine; by MAPK7 and MAPK14 occurs at positions 304 and 311. At Ser347 the chain carries Phosphoserine; by MAPK7. Over residues 382–394 (SNLSINTNQNINI) the composition is skewed to polar residues. The tract at residues 382 to 492 (SNLSINTNQN…KRMRMDAWVT (111 aa)) is disordered. Lys395 carries the post-translational modification N6-acetyllysine; alternate. Residue Lys395 forms a Glycyl lysine isopeptide (Lys-Gly) (interchain with G-Cter in SUMO); alternate linkage. Position 400 is a phosphoserine; by CDK5 (Ser400). The residue at position 407 (Thr407) is a Phosphothreonine. Residues 417-430 (PQPPPPPPQAPQPQ) show a composition bias toward pro residues. A Phosphoserine; by MAPK modification is found at Ser438. Low complexity predominate over residues 438–451 (SPVDSLSSSSSSYD). Basic and acidic residues-rich tracts occupy residues 452–462 (GSDREDPRGDF) and 473–492 (NSEDRESPSVKRMRMDAWVT).

In terms of assembly, binds DNA as a homo- or heterodimer. Dimerizes with MEF2D. Interacts with HDAC7. Interacts with PIAS1; the interaction enhances sumoylation. Interacts with HDAC4, HDAC9 and SLC2A4RG. Interacts (via the N-terminal) with MAPK7; the interaction results in the phosphorylation and transcriptional activity of MEF2A. Post-translationally, constitutive phosphorylation on Ser-400 promotes Lys-395 sumoylation thus preventing acetylation at this site. Dephosphorylation on Ser-400 by PPP3CA upon neuron depolarization promotes a switch from sumoylation to acetylation on residue Lys-395 leading to inhibition of dendrite claw differentiation. Phosphorylation on Thr-304 and Thr-311 are the main sites involved in p38 MAPK signaling and activate transcription. Phosphorylated on these sites by MAPK14/p38alpha and MAPK11/p38beta, but not by MAPK13/p38delta nor by MAPK12/p38gamma. Phosphorylation on Ser-400 by CDK5 induced by neurotoxicity inhibits MEF2A transcriptional activation leading to apoptosis of cortical neurons. Phosphorylation on Thr-304, Thr-311 and Ser-347 can be induced by EGF. In terms of processing, sumoylation on Lys-395 is enhanced by PIAS1 and represses transcriptional activity. Phosphorylation on Ser-400 is required for sumoylation. Has no effect on nuclear location nor on DNA binding. Sumoylated with SUMO1 and, to a lesser extent with SUMO2 and SUMO3. PIASx facilitates sumoylation in postsynaptic dendrites in the cerebellar cortex and promotes their morphogenesis. Acetylation on Lys-395 activates transcriptional activity. Acetylated by p300 on several sites in diffentiating myocytes. Acetylation on Lys-4 increases DNA binding and transactivation. Hyperacetylation by p300 leads to enhanced cardiac myocyte growth and heart failure. Post-translationally, proteolytically cleaved in cerebellar granule neurons on several sites by caspase 3 and caspase 7 following neurotoxicity. Preferentially cleaves the CDK5-mediated hyperphosphorylated form which leads to neuron apoptosis and transcriptional inactivation.

The protein localises to the nucleus. Functionally, transcriptional activator which binds specifically to the MEF2 element, 5'-YTA[AT](4)TAR-3', found in numerous muscle-specific genes. Also involved in the activation of numerous growth factor- and stress-induced genes. Mediates cellular functions not only in skeletal and cardiac muscle development, but also in neuronal differentiation and survival. Plays diverse roles in the control of cell growth, survival and apoptosis via p38 MAPK signaling in muscle-specific and/or growth factor-related transcription. In cerebellar granule neurons, phosphorylated and sumoylated MEF2A represses transcription of NUR77 promoting synaptic differentiation. Associates with chromatin to the ZNF16 promoter. This is Myocyte-specific enhancer factor 2A (MEF2A) from Bos taurus (Bovine).